A 274-amino-acid polypeptide reads, in one-letter code: Pantothenate synthetase (274 aa).

27 to 34 (MGALHQGH) is an ATP binding site. The active-site Proton donor is His34. (R)-pantoate is bound at residue Gln58. Gln58 serves as a coordination point for beta-alanine. 144-147 (GKKD) contributes to the ATP binding site. Gln150 contributes to the (R)-pantoate binding site. Residues Ile173 and 181-184 (LSSR) each bind ATP.

The protein belongs to the pantothenate synthetase family. As to quaternary structure, homodimer.

It is found in the cytoplasm. The enzyme catalyses (R)-pantoate + beta-alanine + ATP = (R)-pantothenate + AMP + diphosphate + H(+). The protein operates within cofactor biosynthesis; (R)-pantothenate biosynthesis; (R)-pantothenate from (R)-pantoate and beta-alanine: step 1/1. Functionally, catalyzes the condensation of pantoate with beta-alanine in an ATP-dependent reaction via a pantoyl-adenylate intermediate. The sequence is that of Pantothenate synthetase from Sulfurovum sp. (strain NBC37-1).